Reading from the N-terminus, the 360-residue chain is D-alanine--D-alanine ligase (360 aa).

The region spanning Lys139–Ser344 is the ATP-grasp domain. Position 172–227 (Glu172–Glu227) interacts with ATP. Residues Asp298, Glu311, and Asn313 each contribute to the Mg(2+) site.

The protein belongs to the D-alanine--D-alanine ligase family. The cofactor is Mg(2+). It depends on Mn(2+) as a cofactor.

The protein resides in the cytoplasm. The catalysed reaction is 2 D-alanine + ATP = D-alanyl-D-alanine + ADP + phosphate + H(+). Its pathway is cell wall biogenesis; peptidoglycan biosynthesis. Functionally, cell wall formation. In Bacillus pumilus (strain SAFR-032), this protein is D-alanine--D-alanine ligase.